We begin with the raw amino-acid sequence, 575 residues long: Serine/threonine-protein kinase STY46 (575 aa).

The disordered stretch occupies residues 116–140 (ADLDSTSNDAGHSSPTRKSIHPPPA). The span at 118–132 (LDSTSNDAGHSSPTR) shows a compositional bias: polar residues. The ACT domain occupies 178–252 (EITFSTEDKP…AKIELQSQSW (75 aa)). The 254-residue stretch at 290 to 543 (LKFGHKIASG…EIIEQLQEIA (254 aa)) folds into the Protein kinase domain. Residues 296–304 (IASGSYGDL) and lysine 317 each bind ATP. Aspartate 411 serves as the catalytic Proton acceptor. A Phosphothreonine modification is found at threonine 443.

It belongs to the protein kinase superfamily. Ser/Thr protein kinase family. In terms of processing, autophosphorylated on serine and threonine residues. Autophosphorylated at Thr-443.

The protein localises to the cytoplasm. It is found in the cytosol. The catalysed reaction is L-seryl-[protein] + ATP = O-phospho-L-seryl-[protein] + ADP + H(+). It carries out the reaction L-threonyl-[protein] + ATP = O-phospho-L-threonyl-[protein] + ADP + H(+). Its activity is regulated as follows. Activated by autophosphorylation at Thr-443. Functionally, serine/threonine protein kinase that specifically phosphorylates chloroplast precursor proteins in the cytosol within the cleavable presequences (transit peptides). May be part of a cytosolic regulatory network involved in chloroplast protein import. Does not phosphorylate mitochondrion precursor proteins. Specific for ATP and does not utilize other NTPs. Plays a role in chloroplast biogenesis and differentiation in cotyledons, possibly through phosphorylation of chloroplast preproteins. The protein is Serine/threonine-protein kinase STY46 of Arabidopsis thaliana (Mouse-ear cress).